A 92-amino-acid polypeptide reads, in one-letter code: Small ribosomal subunit protein uS19 (92 aa).

It belongs to the universal ribosomal protein uS19 family.

Protein S19 forms a complex with S13 that binds strongly to the 16S ribosomal RNA. In Nostoc sp. (strain PCC 7120 / SAG 25.82 / UTEX 2576), this protein is Small ribosomal subunit protein uS19.